The chain runs to 481 residues: Protein nucleotidyltransferase YdiU (481 aa).

8 residues coordinate ATP: Gly85, Gly87, Arg88, Lys108, Asp120, Gly121, Arg171, and Arg178. The active-site Proton acceptor is the Asp248. Mg(2+)-binding residues include Asn249 and Asp258. Asp258 lines the ATP pocket. The disordered stretch occupies residues 458 to 481 (HPGLAEFQQPPTPEQKGLQLSCSS).

This sequence belongs to the SELO family. It depends on Mg(2+) as a cofactor. Requires Mn(2+) as cofactor.

It carries out the reaction L-seryl-[protein] + ATP = 3-O-(5'-adenylyl)-L-seryl-[protein] + diphosphate. It catalyses the reaction L-threonyl-[protein] + ATP = 3-O-(5'-adenylyl)-L-threonyl-[protein] + diphosphate. The catalysed reaction is L-tyrosyl-[protein] + ATP = O-(5'-adenylyl)-L-tyrosyl-[protein] + diphosphate. The enzyme catalyses L-histidyl-[protein] + UTP = N(tele)-(5'-uridylyl)-L-histidyl-[protein] + diphosphate. It carries out the reaction L-seryl-[protein] + UTP = O-(5'-uridylyl)-L-seryl-[protein] + diphosphate. It catalyses the reaction L-tyrosyl-[protein] + UTP = O-(5'-uridylyl)-L-tyrosyl-[protein] + diphosphate. Its function is as follows. Nucleotidyltransferase involved in the post-translational modification of proteins. It can catalyze the addition of adenosine monophosphate (AMP) or uridine monophosphate (UMP) to a protein, resulting in modifications known as AMPylation and UMPylation. The polypeptide is Protein nucleotidyltransferase YdiU (Hydrogenovibrio crunogenus (strain DSM 25203 / XCL-2) (Thiomicrospira crunogena)).